Consider the following 108-residue polypeptide: UPF0060 membrane protein Mvan_3406 (108 aa).

Transmembrane regions (helical) follow at residues 7–27, 32–52, 61–81, and 87–107; these read LLFV…WQGV, GLTW…VAAF, VLAA…VVAD, and RWDI…MYAP.

It belongs to the UPF0060 family.

The protein localises to the cell membrane. The chain is UPF0060 membrane protein Mvan_3406 from Mycolicibacterium vanbaalenii (strain DSM 7251 / JCM 13017 / BCRC 16820 / KCTC 9966 / NRRL B-24157 / PYR-1) (Mycobacterium vanbaalenii).